The primary structure comprises 153 residues: Large ribosomal subunit protein uL15 (153 aa).

A disordered region spans residues 21–40; it reads RGIGSGKGKTGGRGIKGQKS. The segment covering 23 to 35 has biased composition (gly residues); sequence IGSGKGKTGGRGI.

It belongs to the universal ribosomal protein uL15 family. As to quaternary structure, part of the 50S ribosomal subunit.

Its function is as follows. Binds to the 23S rRNA. The protein is Large ribosomal subunit protein uL15 of Rickettsia canadensis (strain McKiel).